Here is a 351-residue protein sequence, read N- to C-terminus: Large ribosomal subunit protein uL3 (351 aa).

2 disordered regions span residues M1–T31 and K246–G271.

Belongs to the universal ribosomal protein uL3 family. Part of the 50S ribosomal subunit. Forms a cluster with proteins L14 and L24e.

One of the primary rRNA binding proteins, it binds directly near the 3'-end of the 23S rRNA, where it nucleates assembly of the 50S subunit. This chain is Large ribosomal subunit protein uL3, found in Saccharolobus islandicus (strain M.14.25 / Kamchatka #1) (Sulfolobus islandicus).